A 518-amino-acid polypeptide reads, in one-letter code: 2-isopropylmalate synthase (518 aa).

Residues 5 to 269 form the Pyruvate carboxyltransferase domain; sequence IIVLDTTLRD…STNVRLKELI (265 aa). Residues Asp14, His204, His206, and Asn240 each coordinate Mn(2+). The regulatory domain stretch occupies residues 397 to 518; that stretch reads ELDSFQVVTN…HDSQAPVSAR (122 aa).

This sequence belongs to the alpha-IPM synthase/homocitrate synthase family. LeuA type 1 subfamily. Homodimer. Requires Mn(2+) as cofactor.

The protein localises to the cytoplasm. It catalyses the reaction 3-methyl-2-oxobutanoate + acetyl-CoA + H2O = (2S)-2-isopropylmalate + CoA + H(+). The protein operates within amino-acid biosynthesis; L-leucine biosynthesis; L-leucine from 3-methyl-2-oxobutanoate: step 1/4. Functionally, catalyzes the condensation of the acetyl group of acetyl-CoA with 3-methyl-2-oxobutanoate (2-ketoisovalerate) to form 3-carboxy-3-hydroxy-4-methylpentanoate (2-isopropylmalate). This Geobacillus sp. (strain Y412MC10) protein is 2-isopropylmalate synthase.